We begin with the raw amino-acid sequence, 975 residues long: Probable ATP-dependent RNA helicase CG8611 (975 aa).

The span at 1 to 24 (MVENISLNVTVKSSARKNQQQSPA) shows a compositional bias: polar residues. Disordered stretches follow at residues 1-38 (MVEN…QDFD), 50-104 (AIVV…DDLM), and 127-295 (TTKP…FRTK). Positions 64–94 (PTNSSVPNTTKSPTPSVSSSKSAISTLSASP) are enriched in low complexity. A phosphoserine mark is found at serine 75 and serine 99. The span at 190-203 (QLEEERRQKRREEG) shows a compositional bias: basic and acidic residues. 3 positions are modified to phosphoserine: serine 210, serine 220, and serine 224. Residues 242 to 261 (IEDSGESGEESATSDEEPDE) are compositionally biased toward acidic residues. Over residues 269 to 285 (QEKEPKQTAKKPPKAEE) the composition is skewed to basic and acidic residues. Residues 327–356 (SKISTLGLHPHAVKNLEDLLSIRELTSVQQ) carry the Q motif motif. The Helicase ATP-binding domain occupies 359-548 (IPEVLQGKDV…GLTLKNPLYI (190 aa)). ATP is bound at residue 372-379 (SQTGSGKT). The DEAD box motif lies at 485–488 (DEAD). The region spanning 616-789 (LLAKEVDASP…DMYAYLQTLL (174 aa)) is the Helicase C-terminal domain. Serine 667 carries the post-translational modification Phosphoserine. Disordered stretches follow at residues 915–942 (LQQR…VGRS) and 955–975 (NMSE…RKQA).

Belongs to the DEAD box helicase family. DDX31/DBP7 subfamily.

The catalysed reaction is ATP + H2O = ADP + phosphate + H(+). Probable ATP-dependent RNA helicase. This Drosophila melanogaster (Fruit fly) protein is Probable ATP-dependent RNA helicase CG8611.